The following is a 501-amino-acid chain: Tetrachloroethene reductive dehalogenase (501 aa).

The tat-type signal signal peptide spans 1 to 37; the sequence is MEKKKKPELSRRDFGKLIIGGGAAATIAPFGVPGANA. Residues Ala74, Tyr207, 309-314, 329-332, and 341-343 each bind corrinoid; these read NGVGQS, MGAC, and VRL. The 4Fe-4S ferredoxin-type 1 domain occupies 356 to 386; the sequence is KPIDFGVTEFCETCKKCARECPSKAITEGPR. [4Fe-4S] cluster-binding residues include Cys366, Cys369, Cys372, and Cys376. 394 to 401 is a binding site for corrinoid; sequence HNQSGKLQ. Cys409 serves as a coordination point for [4Fe-4S] cluster. Residue Tyr419 participates in corrinoid binding. 3 residues coordinate [4Fe-4S] cluster: Cys420, Cys423, and Cys427. In terms of domain architecture, 4Fe-4S ferredoxin-type 2 spans 420–439; the sequence is CGVCVAVCPFTKGNIWIHDG.

The protein belongs to the PceA family. Monomer. The cofactor is [4Fe-4S] cluster. Corrinoid is required as a cofactor. Post-translationally, predicted to be exported by the Tat system. The position of the signal peptide cleavage has not been experimentally proven.

Its subcellular location is the cytoplasm. The protein localises to the cell inner membrane. It catalyses the reaction trichloroethene + chloride + A + H(+) = tetrachloroethene + AH2. The catalysed reaction is trichloroethene + AH2 = (Z)-1,2-dichloroethene + chloride + A + H(+). With respect to regulation, both the processed and unprocessed enzymes are catalytically active. PCE-dependent growth and PceA activity are inhibited in the presence of high concentrations of 5,6-dimethylbenzimidazole (DMB), probably due to the formation a DMB-containing nor-B12 cofactor. Dechlorination of PCE is stimulated by ammonium ions. Activity is inhibited by chlorinated methanes. In terms of biological role, catalyzes the reductive dechlorination of tetrachloroethene (PCE) to trichloroethene (TCE) and of trichloroethene to cis-1,2-dichloroethene (DCE). In addition, trans-1,3-dichloropropene, 1,1,3-trichloropropene and 2,3-dichloropropene are reduced to a mixture of mono-chloropropenes, 1,1-dichloropropene, and 2-chloropropene, respectively. Is also able to convert brominated phenols such as 4-bromophenol (4-BP), 2,4-dibromophenol (2,4-DBP) and 2,4,6-tribromophenol (2,4,6-TBP). Utilizes formate or pyruvate as electron donors. Titanium(III) citrate could also serve as electron donor. Reduced methyl viologen can act as the artificial electron donor. The chain is Tetrachloroethene reductive dehalogenase from Sulfurospirillum multivorans (Dehalospirillum multivorans).